The chain runs to 299 residues: Peroxisomal biogenesis factor 19 (299 aa).

Alanine 2 is subject to N-acetylalanine. The interval 2-56 (AAAEGGCGAGVEADRELEELLESALDDFDKAKPSPAPSPTISAPDASGPQKRSPG) is docking to the peroxisome membrane and binding to PEX3. The tract at residues 2 to 91 (AAAEGGCGAG…QATAEFEKAM (90 aa)) is necessary for PEX19 function on peroxisome biogenesis. A disordered region spans residues 25–63 (ALDDFDKAKPSPAPSPTISAPDASGPQKRSPGDTAKDAL). A phosphoserine mark is found at serine 35, serine 39, serine 54, and serine 66. A Phosphothreonine modification is found at threonine 236. The residue at position 296 (cysteine 296) is a Cysteine methyl ester. The S-farnesyl cysteine moiety is linked to residue cysteine 296. A propeptide spans 297 to 299 (LIM) (removed in mature form).

The protein belongs to the peroxin-19 family. Interacts with a broad range of peroxisomal membrane proteins, including PEX3, PEX10, PEX11A, PEX11B, PEX12, PEX13, PEX14 and PEX16, PXMP2/PMP22, PXMP4/PMP24, SLC25A17/PMP34, ABCD1/ALDP, ABCD2/ALDRP, and ABCD3/PMP70. Also interacts with the tumor suppressor CDKN2A/p19ARF.

The protein localises to the cytoplasm. It is found in the peroxisome membrane. In terms of biological role, necessary for early peroxisomal biogenesis. Acts both as a cytosolic chaperone and as an import receptor for peroxisomal membrane proteins (PMPs). Binds and stabilizes newly synthesized PMPs in the cytoplasm by interacting with their hydrophobic membrane-spanning domains, and targets them to the peroxisome membrane by binding to the integral membrane protein PEX3. Excludes CDKN2A from the nucleus and prevents its interaction with MDM2, which results in active degradation of TP53. This is Peroxisomal biogenesis factor 19 (Pex19) from Rattus norvegicus (Rat).